A 388-amino-acid chain; its full sequence is Succinate--CoA ligase [ADP-forming] subunit beta (388 aa).

The region spanning 9 to 244 is the ATP-grasp domain; it reads KEILRKFGVA…LDEEDPAEIE (236 aa). ATP-binding positions include Lys-46, 53-55, Glu-99, Ala-102, and Glu-107; that span reads GRG. Residues Asn-199 and Asp-213 each coordinate Mg(2+). Substrate-binding positions include Asn-264 and 321-323; that span reads GIM.

Belongs to the succinate/malate CoA ligase beta subunit family. Heterotetramer of two alpha and two beta subunits. Mg(2+) is required as a cofactor.

The catalysed reaction is succinate + ATP + CoA = succinyl-CoA + ADP + phosphate. It catalyses the reaction GTP + succinate + CoA = succinyl-CoA + GDP + phosphate. The protein operates within carbohydrate metabolism; tricarboxylic acid cycle; succinate from succinyl-CoA (ligase route): step 1/1. Succinyl-CoA synthetase functions in the citric acid cycle (TCA), coupling the hydrolysis of succinyl-CoA to the synthesis of either ATP or GTP and thus represents the only step of substrate-level phosphorylation in the TCA. The beta subunit provides nucleotide specificity of the enzyme and binds the substrate succinate, while the binding sites for coenzyme A and phosphate are found in the alpha subunit. This Burkholderia cenocepacia (strain ATCC BAA-245 / DSM 16553 / LMG 16656 / NCTC 13227 / J2315 / CF5610) (Burkholderia cepacia (strain J2315)) protein is Succinate--CoA ligase [ADP-forming] subunit beta.